A 359-amino-acid polypeptide reads, in one-letter code: Guanine nucleotide-binding protein subunit alpha-11 (359 aa).

2 S-palmitoyl cysteine lipidation sites follow: Cys9 and Cys10. In terms of domain architecture, G-alpha spans 38-359 (RELKLLLLGT…QLNLKEYNLV (322 aa)). The G1 motif stretch occupies residues 41–54 (KLLLLGTGESGKST). GTP-binding positions include 46–53 (GTGESGKS) and 180–183 (LRVR). Position 53 (Ser53) interacts with Mg(2+). The G2 motif stretch occupies residues 178–186 (DVLRVRVPT). Residue Thr186 participates in Mg(2+) binding. The tract at residues 201–210 (FRMVDVGGQR) is G3 motif. Positions 270–277 (ILFLNKKD) are G4 motif. GTP contacts are provided by residues 274-277 (NKKD) and Ala331. The segment at 329–334 (TCATDT) is G5 motif.

The protein belongs to the G-alpha family. G(q) subfamily. G proteins are composed of 3 units; alpha, beta and gamma. The alpha chain contains the guanine nucleotide binding site. Interacts with RGS22. Interacts with NTSR1.

The protein resides in the cell membrane. The protein localises to the cytoplasm. The enzyme catalyses GTP + H2O = GDP + phosphate + H(+). In terms of biological role, guanine nucleotide-binding proteins (G proteins) function as transducers downstream of G protein-coupled receptors (GPCRs) in numerous signaling cascades. The alpha chain contains the guanine nucleotide binding site and alternates between an active, GTP-bound state and an inactive, GDP-bound state. Signaling by an activated GPCR promotes GDP release and GTP binding. The alpha subunit has a low GTPase activity that converts bound GTP to GDP, thereby terminating the signal. Both GDP release and GTP hydrolysis are modulated by numerous regulatory proteins. Signaling is mediated via phospholipase C-beta-dependent inositol lipid hydrolysis for signal propagation: activates phospholipase C-beta: following GPCR activation, GNA11 activates PLC-beta (PLCB1, PLCB2, PLCB3 or PLCB4), leading to production of diacylglycerol (DAG) and inositol 1,4,5-trisphosphate (IP3). Transduces FFAR4 signaling in response to long-chain fatty acids (LCFAs). Together with GNAQ, required for heart development. In the respiratory epithelium, transmits OXGR1-dependent signals that lead to downstream intracellular Ca(2+) release and mucocilliary clearance of airborne pathogens. The polypeptide is Guanine nucleotide-binding protein subunit alpha-11 (Gna11) (Mus musculus (Mouse)).